The following is a 367-amino-acid chain: Trans-enoyl reductase opdC (367 aa).

NADP(+) contacts are provided by residues 47 to 50, 199 to 202, Y217, 264 to 265, and 353 to 354; these read YDAK, SPHN, LD, and IT.

This sequence belongs to the zinc-containing alcohol dehydrogenase family. As to quaternary structure, monomer.

It functions in the pathway secondary metabolite biosynthesis. Functionally, trans-enoyl reductase; part of the gene cluster that mediates the biosynthesis of oxopyrrolidines, polyketide-amino acid hybrid compounds with feature structures of tetramic acid. The polyketide chain is first assembled by the highly reducing PKS module of opdA using acetyl-CoA as the starter unit and five malonyl-CoA as the extender units. OpdC acts as a trans-acting enoyl reductase and reduces the terminal alkenyl to alkane. The 17R in oxopyrrolidine A and 15R, 17S in oxopyrrolidine B are generated by non-stereospecific catalysis of the ketoreductase (KR) domain and enoyl reductases. Then the polyketides with specific configurations are transferred to the NRPS module of opdA and linked to L-tyrosine to form an amide bond. Finally, the oxopyrrolidines are offloaded through a Dieckmann cyclization catalyzed by the terminal D domain to give a tetramic acid moiety. The protein is Trans-enoyl reductase opdC of Penicillium oxalicum (strain 114-2 / CGMCC 5302) (Penicillium decumbens).